The chain runs to 263 residues: 3-methyl-2-oxobutanoate hydroxymethyltransferase (263 aa).

Mg(2+) contacts are provided by D45 and D84. 3-methyl-2-oxobutanoate contacts are provided by residues 45–46 (DS), D84, and K112. Residue E114 participates in Mg(2+) binding. E180 (proton acceptor) is an active-site residue.

It belongs to the PanB family. Homodecamer; pentamer of dimers. Requires Mg(2+) as cofactor.

The protein resides in the cytoplasm. The enzyme catalyses 3-methyl-2-oxobutanoate + (6R)-5,10-methylene-5,6,7,8-tetrahydrofolate + H2O = 2-dehydropantoate + (6S)-5,6,7,8-tetrahydrofolate. The protein operates within cofactor biosynthesis; (R)-pantothenate biosynthesis; (R)-pantoate from 3-methyl-2-oxobutanoate: step 1/2. Catalyzes the reversible reaction in which hydroxymethyl group from 5,10-methylenetetrahydrofolate is transferred onto alpha-ketoisovalerate to form ketopantoate. In Salmonella agona (strain SL483), this protein is 3-methyl-2-oxobutanoate hydroxymethyltransferase.